The chain runs to 383 residues: Chaperone protein DnaJ (383 aa).

The region spanning 6–71 is the J domain; that stretch reads DYYEVLGVSK…QKRSQYDQFG (66 aa). The CR-type zinc-finger motif lies at 141 to 223; sequence GVEKKVKVKK…CKGEGVEIGE (83 aa). Zn(2+) is bound by residues C154, C157, C171, C174, C197, C200, C211, and C214. 4 CXXCXGXG motif repeats span residues 154–161, 171–178, 197–204, and 211–218; these read CSKCRGDG, CQTCHGTG, CPTCHGEG, and CSKCKGEG.

The protein belongs to the DnaJ family. In terms of assembly, homodimer. Zn(2+) serves as cofactor.

Its subcellular location is the cytoplasm. Participates actively in the response to hyperosmotic and heat shock by preventing the aggregation of stress-denatured proteins and by disaggregating proteins, also in an autonomous, DnaK-independent fashion. Unfolded proteins bind initially to DnaJ; upon interaction with the DnaJ-bound protein, DnaK hydrolyzes its bound ATP, resulting in the formation of a stable complex. GrpE releases ADP from DnaK; ATP binding to DnaK triggers the release of the substrate protein, thus completing the reaction cycle. Several rounds of ATP-dependent interactions between DnaJ, DnaK and GrpE are required for fully efficient folding. Also involved, together with DnaK and GrpE, in the DNA replication of plasmids through activation of initiation proteins. This is Chaperone protein DnaJ from Porphyromonas gingivalis (strain ATCC BAA-308 / W83).